The primary structure comprises 51 residues: Insulin (51 aa).

3 disulfide bridges follow: C8–C37, C20–C50, and C36–C41.

Belongs to the insulin family. Heterodimer of a B chain and an A chain linked by two disulfide bonds.

The protein resides in the secreted. Insulin decreases blood glucose concentration. It increases cell permeability to monosaccharides, amino acids and fatty acids. It accelerates glycolysis, the pentose phosphate cycle, and glycogen synthesis in liver. This is Insulin (ins) from Platichthys flesus (European flounder).